A 663-amino-acid polypeptide reads, in one-letter code: Translation factor GUF1 homolog, mitochondrial (663 aa).

The transit peptide at 1-33 (MAGAAALRRSARRVVLPGAYALSRALQHPERLL) directs the protein to the mitochondrion. The 193-residue stretch at 55 to 247 (ERVRNFSIIA…AVIERIPSPP (193 aa)) folds into the tr-type G domain. GTP-binding positions include 64-71 (AHVDHGKS), 140-144 (DTPGH), and 194-197 (NKID).

Belongs to the TRAFAC class translation factor GTPase superfamily. Classic translation factor GTPase family. LepA subfamily.

Its subcellular location is the mitochondrion inner membrane. The catalysed reaction is GTP + H2O = GDP + phosphate + H(+). Promotes mitochondrial protein synthesis. May act as a fidelity factor of the translation reaction, by catalyzing a one-codon backward translocation of tRNAs on improperly translocated ribosomes. Binds to mitochondrial ribosomes in a GTP-dependent manner. In Oryza sativa subsp. japonica (Rice), this protein is Translation factor GUF1 homolog, mitochondrial.